Consider the following 326-residue polypeptide: Pyruvate dehydrogenase E1 component subunit beta (326 aa).

Position 59 (Glu59) interacts with thiamine diphosphate.

As to quaternary structure, heterodimer of an alpha and a beta chain. Thiamine diphosphate is required as a cofactor.

The catalysed reaction is N(6)-[(R)-lipoyl]-L-lysyl-[protein] + pyruvate + H(+) = N(6)-[(R)-S(8)-acetyldihydrolipoyl]-L-lysyl-[protein] + CO2. Functionally, the pyruvate dehydrogenase complex catalyzes the overall conversion of pyruvate to acetyl-CoA and CO(2). It contains multiple copies of three enzymatic components: pyruvate dehydrogenase (E1), dihydrolipoamide acetyltransferase (E2) and lipoamide dehydrogenase (E3). The sequence is that of Pyruvate dehydrogenase E1 component subunit beta (pdhB) from Rickettsia conorii (strain ATCC VR-613 / Malish 7).